Consider the following 71-residue polypeptide: Vitellogenin-A1 (71 aa).

The signal sequence occupies residues 1 to 15 (MRGIILALLLAIAGS). The Vitellogenin domain occupies 24-71 (FSESKTSVYNYEAVILNGFPESGLSRAGIKINCKVEISAYAQRSYFLK).

In terms of tissue distribution, produced by the liver, secreted into the blood and then sequestered by receptor mediated endocytosis into growing oocytes, where it is generally cleaved, giving rise to the respective yolk components.

In terms of biological role, precursor of the major egg-yolk proteins that are sources of nutrients during early development of oviparous organisms. This is Vitellogenin-A1 from Xenopus laevis (African clawed frog).